A 551-amino-acid polypeptide reads, in one-letter code: Cu(2+) suppressing and bleomycin sensitive protein 1 (551 aa).

Coiled-coil stretches lie at residues 174 to 213 and 249 to 300; these read REID…EEID and NSLL…DSGK. The tract at residues 513–551 is disordered; that stretch reads EEKAQNSTSSDGSDDDDNGESGIDSNSNDSEPESEYQQE. Positions 532-541 are enriched in low complexity; the sequence is ESGIDSNSND. Positions 542-551 are enriched in acidic residues; that stretch reads SEPESEYQQE.

Belongs to the CUB1 family. In terms of assembly, monomer. Phosphorylated by PKA in vitro.

It localises to the cytoplasm. The protein localises to the nucleus. Involved in bleomycin tolerance with links to DNA repair and/or proteasome function. This Saccharomyces cerevisiae (strain ATCC 204508 / S288c) (Baker's yeast) protein is Cu(2+) suppressing and bleomycin sensitive protein 1 (CUB1).